The primary structure comprises 327 residues: Replication factor C small subunit (327 aa).

Residue 47 to 54 participates in ATP binding; sequence GPPGTGKT.

This sequence belongs to the activator 1 small subunits family. RfcS subfamily. Heteromultimer composed of small subunits (RfcS) and large subunits (RfcL).

Its function is as follows. Part of the RFC clamp loader complex which loads the PCNA sliding clamp onto DNA. The sequence is that of Replication factor C small subunit from Sulfurisphaera tokodaii (strain DSM 16993 / JCM 10545 / NBRC 100140 / 7) (Sulfolobus tokodaii).